The chain runs to 683 residues: Acyl-CoA synthetase short-chain family member 3, mitochondrial (683 aa).

The N-terminal 29 residues, 1–29 (MKPSWLQCRKVTGAGTLGAPLPGSPSVRG), are a transit peptide targeting the mitochondrion. 223 to 226 (EPGR) provides a ligand contact to CoA. ATP is bound by residues 421 to 423 (GER) and 442 to 447 (DHWWQT). N6-succinyllysine is present on Lys514. Position 520 is an N6-acetyllysine (Lys520). The ATP site is built by Asp535, Arg550, and Arg561. Arg620 contributes to the CoA binding site.

The protein belongs to the ATP-dependent AMP-binding enzyme family. In terms of tissue distribution, expressed in a wide range of tissues, with the highest levels observed in the liver followed by kidney.

It localises to the mitochondrion matrix. It catalyses the reaction acetate + ATP + CoA = acetyl-CoA + AMP + diphosphate. It carries out the reaction propanoate + ATP + CoA = propanoyl-CoA + AMP + diphosphate. The catalysed reaction is butanoate + ATP + CoA = butanoyl-CoA + AMP + diphosphate. Its function is as follows. Catalyzes the synthesis of acetyl-CoA from short-chain fatty acids. Propionate is the preferred substrate but can also utilize acetate and butyrate with a much lower affinity. The polypeptide is Acyl-CoA synthetase short-chain family member 3, mitochondrial (Acss3) (Rattus norvegicus (Rat)).